Consider the following 248-residue polypeptide: 3-deoxy-manno-octulosonate cytidylyltransferase (248 aa).

It belongs to the KdsB family.

The protein localises to the cytoplasm. The enzyme catalyses 3-deoxy-alpha-D-manno-oct-2-ulosonate + CTP = CMP-3-deoxy-beta-D-manno-octulosonate + diphosphate. It functions in the pathway nucleotide-sugar biosynthesis; CMP-3-deoxy-D-manno-octulosonate biosynthesis; CMP-3-deoxy-D-manno-octulosonate from 3-deoxy-D-manno-octulosonate and CTP: step 1/1. It participates in bacterial outer membrane biogenesis; lipopolysaccharide biosynthesis. Activates KDO (a required 8-carbon sugar) for incorporation into bacterial lipopolysaccharide in Gram-negative bacteria. The chain is 3-deoxy-manno-octulosonate cytidylyltransferase from Escherichia coli O6:H1 (strain CFT073 / ATCC 700928 / UPEC).